The sequence spans 277 residues: Isoprenyl transferase 1 (277 aa).

Residues 1–30 (MAVRGILGRQRREYRTPEPHPSGARPPKLG) form a disordered region. Residue Asp-42 is part of the active site. Asp-42 is a binding site for Mg(2+). Residues 43–46 (GNGR), Trp-47, Arg-55, His-59, and 87–89 (STE) each bind substrate. Asn-90 functions as the Proton acceptor in the catalytic mechanism. Residues Trp-91, Arg-93, Arg-210, and 216–218 (RTS) each bind substrate. Position 229 (Glu-229) interacts with Mg(2+).

It belongs to the UPP synthase family. In terms of assembly, homodimer. Mg(2+) serves as cofactor.

Its function is as follows. Catalyzes the condensation of isopentenyl diphosphate (IPP) with allylic pyrophosphates generating different type of terpenoids. The sequence is that of Isoprenyl transferase 1 from Streptomyces coelicolor (strain ATCC BAA-471 / A3(2) / M145).